Reading from the N-terminus, the 341-residue chain is Phosphoribosylformylglycinamidine cyclo-ligase (341 aa).

It belongs to the AIR synthase family.

The protein localises to the cytoplasm. The catalysed reaction is 2-formamido-N(1)-(5-O-phospho-beta-D-ribosyl)acetamidine + ATP = 5-amino-1-(5-phospho-beta-D-ribosyl)imidazole + ADP + phosphate + H(+). It participates in purine metabolism; IMP biosynthesis via de novo pathway; 5-amino-1-(5-phospho-D-ribosyl)imidazole from N(2)-formyl-N(1)-(5-phospho-D-ribosyl)glycinamide: step 2/2. This is Phosphoribosylformylglycinamidine cyclo-ligase from Finegoldia magna (strain ATCC 29328 / DSM 20472 / WAL 2508) (Peptostreptococcus magnus).